The chain runs to 257 residues: Imidazole glycerol phosphate synthase subunit HisF (257 aa).

Catalysis depends on residues D12 and D131.

Belongs to the HisA/HisF family. Heterodimer of HisH and HisF.

It localises to the cytoplasm. The enzyme catalyses 5-[(5-phospho-1-deoxy-D-ribulos-1-ylimino)methylamino]-1-(5-phospho-beta-D-ribosyl)imidazole-4-carboxamide + L-glutamine = D-erythro-1-(imidazol-4-yl)glycerol 3-phosphate + 5-amino-1-(5-phospho-beta-D-ribosyl)imidazole-4-carboxamide + L-glutamate + H(+). Its pathway is amino-acid biosynthesis; L-histidine biosynthesis; L-histidine from 5-phospho-alpha-D-ribose 1-diphosphate: step 5/9. Its function is as follows. IGPS catalyzes the conversion of PRFAR and glutamine to IGP, AICAR and glutamate. The HisF subunit catalyzes the cyclization activity that produces IGP and AICAR from PRFAR using the ammonia provided by the HisH subunit. This chain is Imidazole glycerol phosphate synthase subunit HisF, found in Hydrogenovibrio crunogenus (strain DSM 25203 / XCL-2) (Thiomicrospira crunogena).